The chain runs to 261 residues: NAD-capped RNA hydrolase NudC (261 aa).

Arg-74 is a binding site for substrate. Zn(2+) is bound by residues Cys-103, Cys-106, Cys-121, and Cys-124. Tyr-129 is a substrate binding site. Residues 130 to 253 (PRIFPCIIVA…TIARALIEQT (124 aa)) enclose the Nudix hydrolase domain. Positions 163, 179, and 183 each coordinate a divalent metal cation. The Nudix box signature appears at 164-185 (GFVEVGETLEQCVAREVKEETG). Residue 197–204 (QPWAFPSS) participates in substrate binding. Glu-224 lines the a divalent metal cation pocket. Ala-246 is a substrate binding site.

This sequence belongs to the Nudix hydrolase family. NudC subfamily. As to quaternary structure, homodimer. It depends on Mg(2+) as a cofactor. The cofactor is Mn(2+). Zn(2+) is required as a cofactor.

The enzyme catalyses a 5'-end NAD(+)-phospho-ribonucleoside in mRNA + H2O = a 5'-end phospho-adenosine-phospho-ribonucleoside in mRNA + beta-nicotinamide D-ribonucleotide + 2 H(+). The catalysed reaction is NAD(+) + H2O = beta-nicotinamide D-ribonucleotide + AMP + 2 H(+). It carries out the reaction NADH + H2O = reduced beta-nicotinamide D-ribonucleotide + AMP + 2 H(+). In terms of biological role, mRNA decapping enzyme that specifically removes the nicotinamide adenine dinucleotide (NAD) cap from a subset of mRNAs by hydrolyzing the diphosphate linkage to produce nicotinamide mononucleotide (NMN) and 5' monophosphate mRNA. The NAD-cap is present at the 5'-end of some mRNAs and stabilizes RNA against 5'-processing. Has preference for mRNAs with a 5'-end purine. Catalyzes the hydrolysis of a broad range of dinucleotide pyrophosphates. This Vibrio vulnificus (strain CMCP6) protein is NAD-capped RNA hydrolase NudC.